The sequence spans 271 residues: Formamidopyrimidine-DNA glycosylase (271 aa).

Pro2 (schiff-base intermediate with DNA) is an active-site residue. The active-site Proton donor is the Glu3. The Proton donor; for beta-elimination activity role is filled by Lys58. Residues His92, Arg111, and Lys152 each contribute to the DNA site. The segment at 237-271 (YVYGKVQKPCKICNNIITLIRQNGRSTYFCNACQN) adopts an FPG-type zinc-finger fold. Arg261 functions as the Proton donor; for delta-elimination activity in the catalytic mechanism.

This sequence belongs to the FPG family. In terms of assembly, monomer. It depends on Zn(2+) as a cofactor.

It catalyses the reaction Hydrolysis of DNA containing ring-opened 7-methylguanine residues, releasing 2,6-diamino-4-hydroxy-5-(N-methyl)formamidopyrimidine.. The enzyme catalyses 2'-deoxyribonucleotide-(2'-deoxyribose 5'-phosphate)-2'-deoxyribonucleotide-DNA = a 3'-end 2'-deoxyribonucleotide-(2,3-dehydro-2,3-deoxyribose 5'-phosphate)-DNA + a 5'-end 5'-phospho-2'-deoxyribonucleoside-DNA + H(+). Involved in base excision repair of DNA damaged by oxidation or by mutagenic agents. Acts as a DNA glycosylase that recognizes and removes damaged bases. Has a preference for oxidized purines, such as 7,8-dihydro-8-oxoguanine (8-oxoG). Has AP (apurinic/apyrimidinic) lyase activity and introduces nicks in the DNA strand. Cleaves the DNA backbone by beta-delta elimination to generate a single-strand break at the site of the removed base with both 3'- and 5'-phosphates. This chain is Formamidopyrimidine-DNA glycosylase, found in Wolbachia sp. subsp. Drosophila simulans (strain wRi).